The chain runs to 156 residues: 17.4 kDa class I heat shock protein (156 aa).

The sHSP domain maps to 42–156 (DVAAFTNAKV…PEVKSVDISG (115 aa)).

This sequence belongs to the small heat shock protein (HSP20) family. As to quaternary structure, may form oligomeric structures. Binds to AKR2A.

It is found in the cytoplasm. The sequence is that of 17.4 kDa class I heat shock protein (HSP17.4A) from Arabidopsis thaliana (Mouse-ear cress).